A 348-amino-acid chain; its full sequence is Mediator of RNA polymerase II transcription subunit 18 (348 aa).

Residues 152-218 (MDVDLEHKDK…KNDEVKHSEV (67 aa)) show a composition bias toward basic and acidic residues. Residues 152 to 227 (MDVDLEHKDK…VNLEDGAETG (76 aa)) are disordered. A coiled-coil region spans residues 167 to 223 (DTKEKEEDKKEEDKKEEDKKEEDKKEEDKKEEDKKEEEKVEKKNDEVKHSEVNLEDG).

It belongs to the Mediator complex subunit 18 family. In terms of assembly, component of the Mediator complex.

It localises to the nucleus. In terms of biological role, component of the Mediator complex, a coactivator involved in the regulated transcription of nearly all RNA polymerase II-dependent genes. Mediator functions as a bridge to convey information from gene-specific regulatory proteins to the basal RNA polymerase II transcription machinery. Mediator is recruited to promoters by direct interactions with regulatory proteins and serves as a scaffold for the assembly of a functional preinitiation complex with RNA polymerase II and the general transcription factors. The polypeptide is Mediator of RNA polymerase II transcription subunit 18 (SRB5) (Scheffersomyces stipitis (strain ATCC 58785 / CBS 6054 / NBRC 10063 / NRRL Y-11545) (Yeast)).